The primary structure comprises 776 residues: MADRSAIQLIDEEKEFHQSALQYFQQCIGNRDVGLDYHVISVFGSQSSGKSTLLNVLFNTNFDTMDAQVKRQQTTKGIWLAHTKQVNTTIEIDNDRPDIFVLDVEGSDGSERGEDQDFERKAALFAIAVSEVLIVNMWEQQIGLYQGNNMALLKTVFEVNLSLFGKNDNDHKVLLLFVIRDHVGVTPLSSLSDSVTRELEKIWTELSKPAGCEGSSLYDYFDLKFVGLAHKLLQEDKFTQDVKKLGDSFVMKGTENYYFKPQYHHRLPLDGWTMYAENCWDQIERNKDLDLPTQQILVARFKTEEISNEALEEFISKYDESIAPLKGNLGSLTSQLVKLKEECLTKYDEQASRYARNVYMEKREALNTKLNSHISGTINEFLESLMEKLWDDLKLEVSSRDKATTSFVESVAAGKSKIEKEFNESMETFKKLGLLISNEEITCKFSDDIEERIKQLCDAELKAKIGRIKKNLVPELKDHVIHLLSHPSKKVWDDIMNDFESTIKDNISAYQVEKDKYDFKIGLSESENAKIYKNIRILAWRTLDTTVHDYLKIDTIVSILRDRFEDVFRYDAEGSPRLWKTEEEIDGAFRVAKEHALEVFEVLSLAVTSDNVEIIPDVPMAEEESGEDNEIYRDNEGVFHSRRFAHILTELQKENVLDQFRRQINITVLDSKRSIITTRTHIPPWIYVLLAVLGWNEFVAVIRNPLFVTLTLILGATFFVIHKFGLWGPVVNVVQSAVGETRTAIKDKLRQFVVEDHEVKESFEMKDFSKNEQKEK.

At 1-681 (MADRSAIQLI…KRSIITTRTH (681 aa)) the chain is on the cytoplasmic side. The GB1/RHD3-type G domain maps to 34–263 (GLDYHVISVF…TENYYFKPQY (230 aa)). 44–51 (GSQSSGKS) contributes to the GTP binding site. The chain crosses the membrane as a helical span at residues 682-702 (IPPWIYVLLAVLGWNEFVAVI). Residues 703 to 705 (RNP) are Lumenal-facing. Residues 706–726 (LFVTLTLILGATFFVIHKFGL) traverse the membrane as a helical segment. The Cytoplasmic segment spans residues 727-776 (WGPVVNVVQSAVGETRTAIKDKLRQFVVEDHEVKESFEMKDFSKNEQKEK).

Belongs to the TRAFAC class dynamin-like GTPase superfamily. GB1/RHD3 GTPase family. RHD3 subfamily. As to quaternary structure, interacts with RTN1 and YOP1; GTP binding is not required for these interactions.

The protein localises to the endoplasmic reticulum membrane. In terms of biological role, cooperates with the reticulon proteins RTN1 and RTN2 and the tubule-shaping DP1 family protein YOP1 to generate and maintain the structure of the tubular endoplasmic reticulum network. Has GTPase activity, which is required for its function in ER organization. The polypeptide is Protein SEY1 (Saccharomyces cerevisiae (strain YJM789) (Baker's yeast)).